The chain runs to 329 residues: Malate dehydrogenase (329 aa).

Residue Gly12–Gly18 participates in NAD(+) binding. Substrate-binding residues include Arg95 and Arg101. NAD(+) contacts are provided by residues Asn108, Gln115, and Val132 to Asn134. Substrate-binding residues include Asn134 and Arg165. The active-site Proton acceptor is the His190.

This sequence belongs to the LDH/MDH superfamily. MDH type 2 family.

The enzyme catalyses (S)-malate + NAD(+) = oxaloacetate + NADH + H(+). Catalyzes the reversible oxidation of malate to oxaloacetate. The sequence is that of Malate dehydrogenase from Janthinobacterium sp. (strain Marseille) (Minibacterium massiliensis).